The following is a 110-amino-acid chain: Nucleoid-associated protein Mkms_4993 (110 aa).

Belongs to the YbaB/EbfC family. In terms of assembly, homodimer.

It localises to the cytoplasm. The protein localises to the nucleoid. In terms of biological role, binds to DNA and alters its conformation. May be involved in regulation of gene expression, nucleoid organization and DNA protection. This chain is Nucleoid-associated protein Mkms_4993, found in Mycobacterium sp. (strain KMS).